Consider the following 365-residue polypeptide: Chorismate synthase (365 aa).

The NADP(+) site is built by Arg48 and Arg54. FMN is bound by residues Arg125 to Ser127, Asn238 to Ala239, Gly278, Lys293 to Ser297, and Arg319.

Belongs to the chorismate synthase family. In terms of assembly, homotetramer. The cofactor is FMNH2.

It carries out the reaction 5-O-(1-carboxyvinyl)-3-phosphoshikimate = chorismate + phosphate. The protein operates within metabolic intermediate biosynthesis; chorismate biosynthesis; chorismate from D-erythrose 4-phosphate and phosphoenolpyruvate: step 7/7. Its function is as follows. Catalyzes the anti-1,4-elimination of the C-3 phosphate and the C-6 proR hydrogen from 5-enolpyruvylshikimate-3-phosphate (EPSP) to yield chorismate, which is the branch point compound that serves as the starting substrate for the three terminal pathways of aromatic amino acid biosynthesis. This reaction introduces a second double bond into the aromatic ring system. This chain is Chorismate synthase, found in Vesicomyosocius okutanii subsp. Calyptogena okutanii (strain HA).